We begin with the raw amino-acid sequence, 226 residues long: PKHD-type hydroxylase HNE_2117 (226 aa).

The Fe2OG dioxygenase domain occupies 78-178; the sequence is TVLTPRFNRY…RLASFLWTQS (101 aa). Fe cation-binding residues include histidine 96, aspartate 98, and histidine 159. Arginine 169 provides a ligand contact to 2-oxoglutarate.

It depends on Fe(2+) as a cofactor. The cofactor is L-ascorbate.

This is PKHD-type hydroxylase HNE_2117 from Hyphomonas neptunium (strain ATCC 15444).